The primary structure comprises 168 residues: Group IIF secretory phospholipase A2 (168 aa).

Positions 1–20 (MKKFFAIAVLAGSVVTTAHS) are cleaved as a signal peptide. Intrachain disulfides connect Cys-46-Cys-138, Cys-48-Cys-64, Cys-63-Cys-120, Cys-69-Cys-145, Cys-70-Cys-113, Cys-79-Cys-106, and Cys-98-Cys-111. Positions 47, 49, and 51 each coordinate Ca(2+). The active site involves His-67. Asp-68 is a Ca(2+) binding site. N-linked (GlcNAc...) asparagine glycosylation is found at Asn-92 and Asn-102. Asp-114 is a catalytic residue. The required for localization on the plasma membrane stretch occupies residues 139 to 168 (QGPTPNCSIYDPYPEEVTCGHGLPATPVST). The N-linked (GlcNAc...) asparagine glycan is linked to Asn-144.

Belongs to the phospholipase A2 family. It depends on Ca(2+) as a cofactor. Strongly expressed in testis.

The protein resides in the secreted. It localises to the cell membrane. It catalyses the reaction a 1,2-diacyl-sn-glycero-3-phosphocholine + H2O = a 1-acyl-sn-glycero-3-phosphocholine + a fatty acid + H(+). It carries out the reaction 1-hexadecanoyl-2-(9Z-octadecenoyl)-sn-glycero-3-phospho-(1'-sn-glycerol) + H2O = 1-hexadecanoyl-sn-glycero-3-phospho-(1'-sn-glycerol) + (9Z)-octadecenoate + H(+). The catalysed reaction is 1-hexadecanoyl-2-(9Z,12Z-octadecadienoyl)-sn-glycero-3-phosphoethanolamine + H2O = 1-hexadecanoyl-sn-glycero-3-phosphoethanolamine + (9Z,12Z)-octadecadienoate + H(+). The enzyme catalyses 1-hexadecanoyl-2-(5Z,8Z,11Z,14Z-eicosatetraenoyl)-sn-glycero-3-phosphoethanolamine + H2O = 1-hexadecanoyl-sn-glycero-3-phosphoethanolamine + (5Z,8Z,11Z,14Z)-eicosatetraenoate + H(+). It catalyses the reaction 1-hexadecanoyl-2-(9Z-octadecenoyl)-sn-glycero-3-phosphocholine + H2O = 1-hexadecanoyl-sn-glycero-3-phosphocholine + (9Z)-octadecenoate + H(+). It carries out the reaction 1-hexadecanoyl-2-(9Z-octadecenoyl)-sn-glycero-3-phospho-L-serine + H2O = 1-hexadecanoyl-sn-glycero-3-phospho-L-serine + (9Z)-octadecenoate + H(+). Its function is as follows. Secretory calcium-dependent phospholipase A2 that primarily targets extracellular phospholipids. Hydrolyzes the ester bond of the fatty acyl group attached at the sn-2 position of phospholipids (phospholipase A2 activity), the catalytic efficiency decreasing in the following order: phosphatidylglycerols &gt; phosphatidylethanolamines &gt; phosphatidylcholines &gt; phosphatidylserines. May play a role in lipid mediator production in inflammatory conditions, by providing arachidonic acid to downstream cyclooxygenases and lipoxygenases. This is Group IIF secretory phospholipase A2 (Pla2g2f) from Mus musculus (Mouse).